A 184-amino-acid chain; its full sequence is Ribosome-recycling factor (184 aa).

Belongs to the RRF family.

It is found in the cytoplasm. Functionally, responsible for the release of ribosomes from messenger RNA at the termination of protein biosynthesis. May increase the efficiency of translation by recycling ribosomes from one round of translation to another. This is Ribosome-recycling factor from Borrelia recurrentis (strain A1).